A 213-amino-acid chain; its full sequence is MRTSSFLDRLISEVDSALRTLVLPPKRITTRQSPAENLADTVLSAQEKKHISGLMRVNHAGEVCAQALYQGQALTAQLTHIKEQMASAAAEEVDHLAWCEERLYELGSKPSLLNPIWYCGSVLLGALAGLAGDKVSLGFVAETERQVTAHLQRHLHYLPEKDKKTIAILKRMQEDEEHHAHTAMEAGAVELPYIIKQLMNAVSKLMTQSSYYI.

The Fe cation site is built by glutamate 62, glutamate 92, histidine 95, glutamate 144, glutamate 176, and histidine 179.

The protein belongs to the COQ7 family. Fe cation is required as a cofactor.

It localises to the cell membrane. It carries out the reaction a 5-methoxy-2-methyl-3-(all-trans-polyprenyl)benzene-1,4-diol + AH2 + O2 = a 3-demethylubiquinol + A + H2O. It participates in cofactor biosynthesis; ubiquinone biosynthesis. Catalyzes the hydroxylation of 2-nonaprenyl-3-methyl-6-methoxy-1,4-benzoquinol during ubiquinone biosynthesis. In Legionella pneumophila (strain Paris), this protein is 3-demethoxyubiquinol 3-hydroxylase.